The chain runs to 414 residues: Mannan endo-1,4-beta-mannosidase 2 (414 aa).

A signal peptide spans 1 to 25 (MAYFQRLISCIFVLFLLSLAFACEA). Positions 95 and 210 each coordinate substrate. Residue E211 is the Proton donor of the active site. Residue Y288 participates in substrate binding. The Nucleophile role is filled by E328. Substrate is bound at residue W370.

Belongs to the glycosyl hydrolase 5 (cellulase A) family.

The protein localises to the secreted. It catalyses the reaction Random hydrolysis of (1-&gt;4)-beta-D-mannosidic linkages in mannans, galactomannans and glucomannans.. Functionally, possesses endo-beta-mannanase activity in vitro. May be involved in seed germination by weakening the endosperm cap prior to radicle emergence. The polypeptide is Mannan endo-1,4-beta-mannosidase 2 (MAN2) (Solanum lycopersicum (Tomato)).